The following is a 197-amino-acid chain: Sec-independent protein translocase protein TatB (197 aa).

The chain crosses the membrane as a helical span at residues 1 to 21 (MFDIGFGELLLVMVLGLIVLG). A disordered region spans residues 93-197 (KRGYTETPSP…ASARQPSDSR (105 aa)). 2 stretches are compositionally biased toward basic and acidic residues: residues 104–113 (KSDDPKKSGD) and 160–169 (NHNDGRHATS). Residues 180-197 (PEQSQPSAASARQPSDSR) are compositionally biased toward low complexity.

It belongs to the TatB family. In terms of assembly, the Tat system comprises two distinct complexes: a TatABC complex, containing multiple copies of TatA, TatB and TatC subunits, and a separate TatA complex, containing only TatA subunits. Substrates initially bind to the TatABC complex, which probably triggers association of the separate TatA complex to form the active translocon.

It localises to the cell inner membrane. Its function is as follows. Part of the twin-arginine translocation (Tat) system that transports large folded proteins containing a characteristic twin-arginine motif in their signal peptide across membranes. Together with TatC, TatB is part of a receptor directly interacting with Tat signal peptides. TatB may form an oligomeric binding site that transiently accommodates folded Tat precursor proteins before their translocation. This chain is Sec-independent protein translocase protein TatB, found in Pectobacterium atrosepticum (strain SCRI 1043 / ATCC BAA-672) (Erwinia carotovora subsp. atroseptica).